Reading from the N-terminus, the 195-residue chain is Flavin prenyltransferase UbiX (195 aa).

Residues Gly-17–Ser-19, Ser-43, Ser-94–Thr-97, and Arg-129 contribute to the FMN site. Tyr-159 and Arg-175 together coordinate dimethylallyl phosphate.

The protein belongs to the UbiX/PAD1 family.

It catalyses the reaction dimethylallyl phosphate + FMNH2 = prenylated FMNH2 + phosphate. Its function is as follows. Flavin prenyltransferase that catalyzes the synthesis of the prenylated FMN cofactor (prenyl-FMN) for 4-hydroxy-3-polyprenylbenzoic acid decarboxylase UbiD. The prenyltransferase is metal-independent and links a dimethylallyl moiety from dimethylallyl monophosphate (DMAP) to the flavin N5 and C6 atoms of FMN. This Deinococcus radiodurans (strain ATCC 13939 / DSM 20539 / JCM 16871 / CCUG 27074 / LMG 4051 / NBRC 15346 / NCIMB 9279 / VKM B-1422 / R1) protein is Flavin prenyltransferase UbiX.